Reading from the N-terminus, the 360-residue chain is RGG repeats nuclear RNA binding protein B (360 aa).

Disordered stretches follow at residues 1 to 216 and 250 to 360; these read MASV…DKEM and MQQL…TLGK. Ala-2 carries the N-acetylalanine modification. Residues 58–77 show a composition bias toward gly residues; that stretch reads PGGGRGAGRGGSYGRGGRGG. Composition is skewed to basic and acidic residues over residues 99–108 and 132–157; these read RRSEEGDGAR and DSERPRKNYDRHSRTAYGNEDKRDGA. The span at 162–176 shows a compositional bias: polar residues; it reads WGTTQDDITPVTEES. 3 stretches are compositionally biased toward basic and acidic residues: residues 184-216, 258-283, and 311-336; these read LTVEKQDGEGEATDAKNETPAEKAEEKPEDKEM, SNNDEVFIKLGTEKDKRITEREEKTR, and REGRGPREGNQRDGGRNLREGGRNQR. Residues 223–288 form the FF domain; that stretch reads KVLEEKKKAL…EEKTRKSLSI (66 aa). Ser-258 bears the Phosphoserine mark.

It belongs to the SERBP1-HABP4 family.

The protein resides in the nucleus. It is found in the cytoplasm. The protein localises to the perinuclear region. Functionally, ribosome-binding protein that acts as a regulator of mRNA translation by promoting ribosome inactivation. Binds RNA. The protein is RGG repeats nuclear RNA binding protein B of Arabidopsis thaliana (Mouse-ear cress).